The chain runs to 147 residues: MAPELRLAVQFASGADDLPSRAQIRRWVAAALEHDAEITVRIVDADEAQALNRAYRDKDYVPNVLTFEYGEIAPALLGGDVVICAPVVEREAREQGKPLGHHYAHMTVHGVLHLQGYDHVDAADAERMETREAAILKRFHIPHPYHS.

The Zn(2+) site is built by His-109, His-113, and His-119.

This sequence belongs to the endoribonuclease YbeY family. It depends on Zn(2+) as a cofactor.

It localises to the cytoplasm. Single strand-specific metallo-endoribonuclease involved in late-stage 70S ribosome quality control and in maturation of the 3' terminus of the 16S rRNA. The chain is Endoribonuclease YbeY from Thiobacillus denitrificans (strain ATCC 25259 / T1).